The primary structure comprises 191 residues: Peptidyl-tRNA hydrolase (191 aa).

Residue Tyr14 coordinates tRNA. Residue His19 is the Proton acceptor of the active site. Tyr64, Asn66, and Asn112 together coordinate tRNA.

This sequence belongs to the PTH family. Monomer.

The protein localises to the cytoplasm. The enzyme catalyses an N-acyl-L-alpha-aminoacyl-tRNA + H2O = an N-acyl-L-amino acid + a tRNA + H(+). In terms of biological role, hydrolyzes ribosome-free peptidyl-tRNAs (with 1 or more amino acids incorporated), which drop off the ribosome during protein synthesis, or as a result of ribosome stalling. Catalyzes the release of premature peptidyl moieties from peptidyl-tRNA molecules trapped in stalled 50S ribosomal subunits, and thus maintains levels of free tRNAs and 50S ribosomes. This is Peptidyl-tRNA hydrolase from Clostridium beijerinckii (strain ATCC 51743 / NCIMB 8052) (Clostridium acetobutylicum).